The sequence spans 809 residues: Integrin beta pat-3 (809 aa).

The signal sequence occupies residues 1–19 (MPPSTSLLLLAALLPFALP). Topologically, residues 20-737 (ASDWKTGEVT…KHKDCPPPVP (718 aa)) are extracellular. N-linked (GlcNAc...) asparagine glycans are attached at residues Asn-47, Asn-141, Asn-269, Asn-373, and Asn-400. Residues 153–352 (DLYYLMDLSY…IFAVTKNNQD (200 aa)) form the VWFA domain. Intrachain disulfides connect Cys-476/Cys-496, Cys-489/Cys-499, Cys-501/Cys-510, Cys-512/Cys-543, Cys-526/Cys-541, Cys-535/Cys-546, Cys-548/Cys-563, Cys-565/Cys-586, Cys-570/Cys-584, Cys-578/Cys-589, Cys-591/Cys-600, Cys-602/Cys-625, Cys-609/Cys-623, Cys-617/Cys-628, and Cys-630/Cys-644. 4 consecutive I-EGF domains span residues 476–511 (CERQDRIVTNSADCNGGDMVCGVCRCKGGNVGKYCE), 512–564 (CNRP…EFCE), 565–601 (CDNFNCPRHDRKICAEHGECNCGKCICAPGWTGRACE), and 602–645 (CPIS…AKCE). The N-linked (GlcNAc...) asparagine glycan is linked to Asn-530. N-linked (GlcNAc...) asparagine glycosylation is found at Asn-672, Asn-693, and Asn-721. Residues 738–758 (VLAIVLGVIAGIVILGILLLL) form a helical membrane-spanning segment. Residues 759 to 809 (LWKLLTVLHDRSEYATFNNERLMAKWDTNENPIYKQATTTFKNPVYAGKAN) are Cytoplasmic-facing. Residue Tyr-792 is modified to Phosphotyrosine.

This sequence belongs to the integrin beta chain family. Heterodimer of an alpha and a beta subunit. Interacts with alpha subunit ina-1. Interacts with alpha subunit pat-2. Component of an integrin containing attachment complex, composed of at least pat-2, pat-3, pat-4, pat-6, unc-52, unc-97 and unc-112. May interact with tns-1 (via C-terminus). Post-translationally, phosphorylated. Dephosphorylated by dep-1. As to expression, expressed in body wall muscles (at protein level). Expressed in gonadal sheath cells and spermatheca. Expressed in vulval cells and along the basal laminae that separate the vulval cells from the uterus (at the protein level).

It localises to the cell membrane. The protein resides in the lateral cell membrane. Its subcellular location is the basolateral cell membrane. The protein localises to the cytoplasm. It is found in the myofibril. It localises to the sarcomere. The protein resides in the m line. Its subcellular location is the cell junction. The protein localises to the focal adhesion. Integrin alpha ina-1/beta pat-3 is a receptor for laminin. Integrin alpha pat-2/beta pat-3 recognizes the sequence R-G-D in its ligands. Plays a role in cell migration, morphogenesis and probably in cell-cell interactions. During gonad morphogenesis, involved in distal tip cell (DTC)-mediated guidance of gonad elongation, in maintaining their sharp tapering morphology and in their migration. Component of an integrin containing attachment complex, which is required for muscle development and maintenance. Involved in the assembly of dense bodies and M lines during body wall muscle embryonic development by recruiting one of their components, cpna-1, to integrin-mediated attachment sites. May play a similar role in the assembly of dense bodies in gonadal myoepithelial sheath cells. Probably by acting as a receptor for apoptotic cells, plays a role in the clearance of apoptotic cells during mid-embryogenesis. Required for ovulation. Dephosphorylated, probably within the alpha pat-2/beta pat-3 integrin receptor complex, by the phosphatase dep-1, which leads to down-stream effects including the negative regulation of let-23 signaling and vulval induction. When unphosphosphorylated, recruits the cytoplasmic adapter protein tln-1 to the plasma membrane of secondary vulval precursor cells. This promotes the linking of focal adhesion sites to the F-actin cytoskeleton, and it also acts to restrict the mobility of the let-23 receptor on the plasma membrane of vulval cells which thereby attenuates let-23 signaling. Plays a role in axon regeneration after injury. The polypeptide is Integrin beta pat-3 (Caenorhabditis elegans).